The following is a 28-amino-acid chain: Ranatuerin-2AVa (28 aa).

An intrachain disulfide couples Cys-23 to Cys-28.

In terms of tissue distribution, expressed by the skin glands.

It is found in the secreted. Functionally, has antibacterial activity against the Gram positive bacterium L.lactis. This chain is Ranatuerin-2AVa, found in Rana arvalis (Moor frog).